The primary structure comprises 492 residues: Cobyric acid synthase (492 aa).

The GATase cobBQ-type domain occupies V253–A441. C334 (nucleophile) is an active-site residue. H433 is a catalytic residue.

The protein belongs to the CobB/CobQ family. CobQ subfamily.

The protein operates within cofactor biosynthesis; adenosylcobalamin biosynthesis. Functionally, catalyzes amidations at positions B, D, E, and G on adenosylcobyrinic A,C-diamide. NH(2) groups are provided by glutamine, and one molecule of ATP is hydrogenolyzed for each amidation. This Azoarcus sp. (strain BH72) protein is Cobyric acid synthase.